The following is a 727-amino-acid chain: Fatty acid oxidation complex subunit alpha (727 aa).

The enoyl-CoA hydratase stretch occupies residues 16–205 (NQTASVFSFD…RLGLVDDAVP (190 aa)). Positions 321–727 (AKIKHVGILG…MAEQNKSFYP (407 aa)) are 3-hydroxyacyl-CoA dehydrogenase.

In the N-terminal section; belongs to the enoyl-CoA hydratase/isomerase family. This sequence in the central section; belongs to the 3-hydroxyacyl-CoA dehydrogenase family. In terms of assembly, heterotetramer of two alpha chains (FadJ) and two beta chains (FadI).

The protein localises to the cytoplasm. The enzyme catalyses a (3S)-3-hydroxyacyl-CoA = a (2E)-enoyl-CoA + H2O. It catalyses the reaction a 4-saturated-(3S)-3-hydroxyacyl-CoA = a (3E)-enoyl-CoA + H2O. The catalysed reaction is a (3S)-3-hydroxyacyl-CoA + NAD(+) = a 3-oxoacyl-CoA + NADH + H(+). It carries out the reaction (3S)-3-hydroxybutanoyl-CoA = (3R)-3-hydroxybutanoyl-CoA. The protein operates within lipid metabolism; fatty acid beta-oxidation. Functionally, catalyzes the formation of a hydroxyacyl-CoA by addition of water on enoyl-CoA. Also exhibits 3-hydroxyacyl-CoA epimerase and 3-hydroxyacyl-CoA dehydrogenase activities. This is Fatty acid oxidation complex subunit alpha from Photorhabdus laumondii subsp. laumondii (strain DSM 15139 / CIP 105565 / TT01) (Photorhabdus luminescens subsp. laumondii).